Consider the following 482-residue polypeptide: Nucleoside triphosphate pyrophosphatase/Nudix hydrolase fusion protein (482 aa).

The interval 1–299 (MSIPLILASK…DLWNVGRGEL (299 aa)) is maf-like. The active-site Proton acceptor is the D167. Positions 338-475 (GTNGASGILL…TDWPRFAARL (138 aa)) constitute a Nudix hydrolase domain.

In the N-terminal section; belongs to the Maf family. A divalent metal cation serves as cofactor.

It localises to the cytoplasm. It catalyses the reaction a ribonucleoside 5'-triphosphate + H2O = a ribonucleoside 5'-phosphate + diphosphate + H(+). The enzyme catalyses a 2'-deoxyribonucleoside 5'-triphosphate + H2O = a 2'-deoxyribonucleoside 5'-phosphate + diphosphate + H(+). Nucleoside triphosphate pyrophosphatase. May have a dual role in cell division arrest and in preventing the incorporation of modified nucleotides into cellular nucleic acids. This Bifidobacterium longum (strain NCC 2705) protein is Nucleoside triphosphate pyrophosphatase/Nudix hydrolase fusion protein.